A 268-amino-acid chain; its full sequence is MSGKHYKGPEVSCCIKYFIFGFNVIFWFLGITFLGIGLWAWNEKGVLSNISSITDLGGFDPVWLFLVVGGVMFILGFAGCIGALRENTFLLKFFSVFLGIIFFLELTAGVLAFVFKDWIKDQLYFFINNNIRAYRDDIDLQNLIDFTQEYWQCCGAFGADDWNLNIYFNCTDSNASRERCGVPFSCCTKDPAEDVINTQCGYDARQKPEVDQQIVIYTKGCVPQFEKWLQDNLTIVAGIFIGIALLQIFGICLAQNLVSDIEAVRASW.

The Cytoplasmic portion of the chain corresponds to 1–17; it reads MSGKHYKGPEVSCCIKY. A helical transmembrane segment spans residues 18-38; sequence FIFGFNVIFWFLGITFLGIGL. At 39–61 the chain is on the extracellular side; the sequence is WAWNEKGVLSNISSITDLGGFDP. N-linked (GlcNAc...) asparagine glycosylation occurs at Asn49. A helical transmembrane segment spans residues 62 to 82; that stretch reads VWLFLVVGGVMFILGFAGCIG. Residues 83 to 92 are Cytoplasmic-facing; it reads ALRENTFLLK. The helical transmembrane segment at 93 to 113 threads the bilayer; it reads FFSVFLGIIFFLELTAGVLAF. At 114 to 232 the chain is on the extracellular side; that stretch reads VFKDWIKDQL…PQFEKWLQDN (119 aa). Disulfide bonds link Cys153-Cys221, Cys154-Cys186, Cys170-Cys180, and Cys187-Cys200. N-linked (GlcNAc...) asparagine glycans are attached at residues Asn169 and Asn174. Asn232 carries N-linked (GlcNAc...) asparagine glycosylation. The helical transmembrane segment at 233–253 threads the bilayer; it reads LTIVAGIFIGIALLQIFGICL. Over 254-268 the chain is Cytoplasmic; the sequence is AQNLVSDIEAVRASW.

This sequence belongs to the tetraspanin (TM4SF) family. Interacts with ADAM10; the interaction influences ADAM10 substrate specificity, endocytosis and turnover. Palmitoylated.

Its subcellular location is the cell membrane. Its function is as follows. Part of TspanC8 subgroup, composed of 6 members that interact with the transmembrane metalloprotease ADAM10. This interaction is required for ADAM10 exit from the endoplasmic reticulum and for enzymatic maturation and trafficking to the cell surface as well as substrate specificity. Different TspanC8/ADAM10 complexes have distinct substrates. Promotes ADAM10-mediated cleavage of CD44. Seems to regulate VE-cadherin expression in endothelial cells probably through interaction with ADAM10, promoting leukocyte transmigration. The polypeptide is Tetraspanin-5 (Homo sapiens (Human)).